The chain runs to 3081 residues: Cilia- and flagella-associated protein 54 (3081 aa).

Disordered regions lie at residues 542-579, 591-626, 910-942, 1406-1451, 1518-1586, 1636-1657, 2176-2210, 2229-2306, and 2776-2806; these read SGTA…AGGA, TQTA…QSSL, PPQP…GARK, ADAP…GITP, ESIL…YPVV, RRAA…EERP, GERT…LPEP, MASG…SQRA, and ARPV…SGDG. Low complexity predominate over residues 564–579; that stretch reads GGSASPPNGSSGAGGA. Positions 1428 to 1449 are enriched in pro residues; the sequence is MPPPVPDPSAAGPPPLTPPEGI. The span at 1538-1550 shows a compositional bias: basic and acidic residues; it reads GGKDDKKKDDKAP. Low complexity-rich tracts occupy residues 1638 to 1648, 2181 to 2199, and 2240 to 2269; these read AALAASASTAG, APKP…AAAA, and EPSS…SPTG. The span at 2289–2301 shows a compositional bias: pro residues; that stretch reads PEVPGPPPPPPPS. A compositionally biased stretch (low complexity) spans 2776–2788; that stretch reads ARPVATSSSGARP. A compositionally biased stretch (gly residues) spans 2796–2805; the sequence is KPGAGGGSGD.

This sequence belongs to the CFAP54 family. In terms of assembly, part of the PDCP1 complex composed of CFAP46, CFAP54, CFAP74 and CFAP221; the PDCP1 complex binds calmodulin.

The protein localises to the cytoplasm. It is found in the cytoskeleton. Its subcellular location is the cilium axoneme. In Chlamydomonas reinhardtii (Chlamydomonas smithii), this protein is Cilia- and flagella-associated protein 54.